The following is a 92-amino-acid chain: Cell division protein FtsB (92 aa).

The Cytoplasmic portion of the chain corresponds to 1–3; the sequence is MRL. A helical membrane pass occupies residues 4 to 21; it reads LILILLSVLVLFQHDFWF. At 22 to 92 the chain is on the periplasmic side; the sequence is GSNGFLDYRQ…VFYHIVKESK (71 aa). A coiled-coil region spans residues 28-63; sequence DYRQNAEKIKENQAENEKLSQRNQRINAEIQGLTKG.

It belongs to the FtsB family. Part of a complex composed of FtsB, FtsL and FtsQ.

The protein localises to the cell inner membrane. Its function is as follows. Essential cell division protein. May link together the upstream cell division proteins, which are predominantly cytoplasmic, with the downstream cell division proteins, which are predominantly periplasmic. This chain is Cell division protein FtsB, found in Haemophilus influenzae (strain PittEE).